A 108-amino-acid polypeptide reads, in one-letter code: Probable 4-amino-4-deoxy-L-arabinose-phosphoundecaprenol flippase subunit ArnE (108 aa).

3 helical membrane-spanning segments follow: residues 32-52 (PLLLWLGGSVLLLGMAMLVWL), 58-78 (VPVGVAYPMLSLNFIFVTLAA), and 85-105 (TLSLRHALGVILIVAGVAIMG). In terms of domain architecture, EamA spans 34 to 106 (LLWLGGSVLL…IVAGVAIMGS (73 aa)).

Belongs to the ArnE family. In terms of assembly, heterodimer of ArnE and ArnF.

The protein localises to the cell inner membrane. It participates in bacterial outer membrane biogenesis; lipopolysaccharide biosynthesis. Functionally, translocates 4-amino-4-deoxy-L-arabinose-phosphoundecaprenol (alpha-L-Ara4N-phosphoundecaprenol) from the cytoplasmic to the periplasmic side of the inner membrane. The polypeptide is Probable 4-amino-4-deoxy-L-arabinose-phosphoundecaprenol flippase subunit ArnE (Erwinia tasmaniensis (strain DSM 17950 / CFBP 7177 / CIP 109463 / NCPPB 4357 / Et1/99)).